Reading from the N-terminus, the 163-residue chain is MMREILTSRFFPSLFKKRLDFSNRVVLGLGSNLKNPLKILKNCFLYFKNHSKIGKIFSSPIYINPPFGYTKQPNFYNATIILKTSLSLRHFFALVFYIERRFGRQRKRDFKDAPRTLDIDIIAFNQVILRQNDLALPHPKWSERDSVLVPLALQQILFKKGEW.

This sequence belongs to the HPPK family.

The catalysed reaction is 6-hydroxymethyl-7,8-dihydropterin + ATP = (7,8-dihydropterin-6-yl)methyl diphosphate + AMP + H(+). It participates in cofactor biosynthesis; tetrahydrofolate biosynthesis; 2-amino-4-hydroxy-6-hydroxymethyl-7,8-dihydropteridine diphosphate from 7,8-dihydroneopterin triphosphate: step 4/4. Catalyzes the transfer of pyrophosphate from adenosine triphosphate (ATP) to 6-hydroxymethyl-7,8-dihydropterin, an enzymatic step in folate biosynthesis pathway. The protein is 2-amino-4-hydroxy-6-hydroxymethyldihydropteridine pyrophosphokinase (folK) of Helicobacter pylori (strain ATCC 700392 / 26695) (Campylobacter pylori).